Here is a 122-residue protein sequence, read N- to C-terminus: Lithostathine (122 aa).

The first 26 residues, 1–26 (MLPSMSLPSLXWMLLSCLMLLSQVQG), serve as a signal peptide directing secretion. Residues 27–37 (EDSPADTPSAR) constitute a propeptide that is removed on maturation. A C-type lectin domain is found at 38–122 (ISCPKGSMAY…LEPNAGGWEW (85 aa)). An intrachain disulfide couples C40 to C51.

In terms of assembly, cleaved to give an A chain and a B chain joined by a disulfide bond. As to expression, in pancreatic acinar cells.

It localises to the secreted. Its function is as follows. Might act as an inhibitor of spontaneous calcium carbonate precipitation. The protein is Lithostathine (PTP) of Sus scrofa (Pig).